We begin with the raw amino-acid sequence, 459 residues long: Argininosuccinate lyase (459 aa).

Belongs to the lyase 1 family. Argininosuccinate lyase subfamily.

It localises to the cytoplasm. It carries out the reaction 2-(N(omega)-L-arginino)succinate = fumarate + L-arginine. It functions in the pathway amino-acid biosynthesis; L-arginine biosynthesis; L-arginine from L-ornithine and carbamoyl phosphate: step 3/3. The sequence is that of Argininosuccinate lyase from Geobacillus thermodenitrificans (strain NG80-2).